A 262-amino-acid polypeptide reads, in one-letter code: MTQPVPRLSVPAALALGSAALGAAFATGLFLGRRCPPWRGRREQCLLPPEDSRLWQYLLSRSMREHPALRSLRLLTLEQPQGDSMMTCEQAQLLANLARLIQAKKALDLGTFTGYSALALALALPADGRVVTCEVDAQPPELGRPLWRQAEAEHKIDLRLKPALETLDELLAAGEAGTFDVAVVDADKENCSAYYERCLQLLRPGGILAVLRVLWRGKVLQPPKGDVAAECVRNLNERIRRDVRVYISLLPLGDGLTLAFKI.

A helical; Signal-anchor for type II membrane protein transmembrane segment spans residues 12 to 32 (AALALGSAALGAAFATGLFLG). Residues D108, 110–111 (GT), S116, E134, V135, A163, D185, D187, and Y194 contribute to the S-adenosyl-L-methionine site.

Belongs to the class I-like SAM-binding methyltransferase superfamily. Cation-dependent O-methyltransferase family. As to quaternary structure, homodimer.

The protein localises to the membrane. Its function is as follows. Putative O-methyltransferase. The protein is Catechol O-methyltransferase domain-containing protein 1 (COMTD1) of Homo sapiens (Human).